A 74-amino-acid polypeptide reads, in one-letter code: Putative membrane protein insertion efficiency factor (74 aa).

It belongs to the UPF0161 family.

It is found in the cell inner membrane. In terms of biological role, could be involved in insertion of integral membrane proteins into the membrane. The polypeptide is Putative membrane protein insertion efficiency factor (Endomicrobium trichonymphae).